The primary structure comprises 350 residues: Probable arabinogalactan endo-beta-1,4-galactanase A (350 aa).

The N-terminal stretch at 1–16 (MIYPLLLSALPLLSSA) is a signal peptide. The N-linked (GlcNAc...) asparagine glycan is linked to Asn128. Glu152 acts as the Proton donor in catalysis. Glu262 functions as the Nucleophile in the catalytic mechanism.

Belongs to the glycosyl hydrolase 53 family.

The protein localises to the secreted. The enzyme catalyses The enzyme specifically hydrolyzes (1-&gt;4)-beta-D-galactosidic linkages in type I arabinogalactans.. Functionally, endogalactanase involved in the degradation of plant cell wall polysaccharides, and more particularly of hairy regions of pectin. This chain is Probable arabinogalactan endo-beta-1,4-galactanase A (galA), found in Aspergillus tubingensis.